The following is a 290-amino-acid chain: GTPase Era (290 aa).

In terms of domain architecture, Era-type G spans 2-167 (KSGFVSIVGR…LDELVKYLPE (166 aa)). The G1 stretch occupies residues 10–17 (GRTNAGKS). 10–17 (GRTNAGKS) contacts GTP. Residues 36–40 (NATRR) form a G2 region. The tract at residues 57 to 60 (DTPG) is G3. GTP-binding positions include 57–61 (DTPGL) and 116–119 (NKVD). The interval 116–119 (NKVD) is G4. The G5 stretch occupies residues 146–148 (YSI). The KH type-2 domain maps to 194-274 (IYENLSDEIP…MLKLFVQLEK (81 aa)).

Belongs to the TRAFAC class TrmE-Era-EngA-EngB-Septin-like GTPase superfamily. Era GTPase family. Monomer.

The protein resides in the cytoplasm. The protein localises to the cell inner membrane. In terms of biological role, an essential GTPase that binds both GDP and GTP, with rapid nucleotide exchange. Plays a role in 16S rRNA processing and 30S ribosomal subunit biogenesis and possibly also in cell cycle regulation and energy metabolism. This Campylobacter lari (strain RM2100 / D67 / ATCC BAA-1060) protein is GTPase Era.